A 241-amino-acid chain; its full sequence is Small ribosomal subunit protein uS2 (241 aa).

Belongs to the universal ribosomal protein uS2 family.

The protein is Small ribosomal subunit protein uS2 of Erwinia tasmaniensis (strain DSM 17950 / CFBP 7177 / CIP 109463 / NCPPB 4357 / Et1/99).